Consider the following 160-residue polypeptide: MATFEGRFSDAAGLRVGIVVARFNDLVTAKLLSGCLDCLKRHGVDVSETSSQLDVAWVPGSFELPIVAQQMARCGQYQVLITLGAVIRGDTPHFDVVVAEASKGVAAVARDTSVPVIFGVLTTDTMQQALERAGIKSNLGWSYGLEALEMGSLMRALPSA.

Residues Phe-23, 61–63 (SFE), and 85–87 (AVI) contribute to the 5-amino-6-(D-ribitylamino)uracil site. Residue 90-91 (DT) participates in (2S)-2-hydroxy-3-oxobutyl phosphate binding. Residue His-93 is the Proton donor of the active site. Phe-118 is a binding site for 5-amino-6-(D-ribitylamino)uracil. Residue Arg-132 coordinates (2S)-2-hydroxy-3-oxobutyl phosphate.

The protein belongs to the DMRL synthase family.

It catalyses the reaction (2S)-2-hydroxy-3-oxobutyl phosphate + 5-amino-6-(D-ribitylamino)uracil = 6,7-dimethyl-8-(1-D-ribityl)lumazine + phosphate + 2 H2O + H(+). Its pathway is cofactor biosynthesis; riboflavin biosynthesis; riboflavin from 2-hydroxy-3-oxobutyl phosphate and 5-amino-6-(D-ribitylamino)uracil: step 1/2. In terms of biological role, catalyzes the formation of 6,7-dimethyl-8-ribityllumazine by condensation of 5-amino-6-(D-ribitylamino)uracil with 3,4-dihydroxy-2-butanone 4-phosphate. This is the penultimate step in the biosynthesis of riboflavin. This is 6,7-dimethyl-8-ribityllumazine synthase from Synechococcus sp. (strain CC9605).